The chain runs to 113 residues: Large ribosomal subunit protein bL19 (113 aa).

It belongs to the bacterial ribosomal protein bL19 family.

This protein is located at the 30S-50S ribosomal subunit interface and may play a role in the structure and function of the aminoacyl-tRNA binding site. The protein is Large ribosomal subunit protein bL19 of Rhodococcus jostii (strain RHA1).